The chain runs to 1904 residues: Voltage-dependent calcium channel type A subunit alpha-1 (1904 aa).

The interval 1–45 is disordered; sequence MLGGVGGRHMSTRRRGSSPLVRGGAGLTGYAGPGASGNSNDVAAI. The span at 23–35 shows a compositional bias: gly residues; the sequence is GGAGLTGYAGPGA. At 30-168 the chain is on the cytoplasmic side; the sequence is YAGPGASGNS…KHTRFIIEWP (139 aa). The stretch at 155 to 447 is one I repeat; it reads NCIRKHTRFI…LVLGVLSGEF (293 aa). A helical membrane pass occupies residues 169-187; the sequence is PFEYAVLLTIIANCVVLAL. The Extracellular portion of the chain corresponds to 188-205; it reads EEHLPKQDKTILAQKLEA. A helical membrane pass occupies residues 206-225; the sequence is TEIYFLGIFCVEASLKILAL. Residues 226–237 are Cytoplasmic-facing; sequence GFVLHRGSYLRN. Residues 238–259 form a helical membrane-spanning segment; sequence IWNIMDFFVVVTGFITAFSQGI. Over 260-264 the chain is Extracellular; sequence ELDMD. The helical transmembrane segment at 265 to 283 threads the bilayer; that stretch reads LRTLRAIRVLRPLKLVSGI. Topologically, residues 284–302 are cytoplasmic; sequence PSLQVVLKSIIKAMAPLLQ. Residues 303 to 322 form a helical membrane-spanning segment; the sequence is IGLLVLFAIVIFAIIGLEFY. The Extracellular segment spans residues 323–419; it reads SGTLHKTCYS…WTNDALGSTY (97 aa). Asn353 and Asn367 each carry an N-linked (GlcNAc...) asparagine glycan. The helical transmembrane segment at 420 to 444 threads the bilayer; sequence NWIYFIPLIVLGSFFMLNLVLGVLS. Topologically, residues 445–568 are cytoplasmic; sequence GEFAKEREKV…YWIRKSVKSQ (124 aa). Residues 513 to 543 form a disordered region; it reads KKLGKSKSTDTEEEEGDDDQDDGELSSSTKE. Residues 523-536 show a composition bias toward acidic residues; sequence TEEEEGDDDQDDGE. An II repeat occupies 554–797; that stretch reads EKRFRYWIRK…VFLAIAVDNL (244 aa). The chain crosses the membrane as a helical span at residues 569–587; the sequence is KFYWFVIVLVFFNTVCVAV. Topologically, residues 588 to 602 are extracellular; it reads EHYGQPQWLTDFLYF. A helical membrane pass occupies residues 603–622; it reads AEFVFLALFMLEMFIKVYAL. Topologically, residues 623 to 630 are cytoplasmic; it reads GPRTYFDS. The helical transmembrane segment at 631–649 threads the bilayer; the sequence is SFNRFDCVVISGSIFEVIW. The Extracellular segment spans residues 650–658; the sequence is SEVKSGSFG. The chain crosses the membrane as a helical span at residues 659–677; it reads LSVLRALRLLRIFKVTKYW. The Cytoplasmic portion of the chain corresponds to 678 to 696; it reads KSLRNLVISLLSSMRSIIS. The helical transmembrane segment at 697 to 716 threads the bilayer; sequence LLFLLFLFILIFALLGMQLF. Residues 717 to 769 lie on the Extracellular side of the membrane; it reads GGQFNFDSGTPPTNFNTFPIALLTVFQILTGEDWNEVMYQGIESQGGHKKGMI. Residues 770 to 794 form a helical membrane-spanning segment; it reads YSLYFIVLVLFGNYTLLNVFLAIAV. At 795–895 the chain is on the cytoplasmic side; it reads DNLANAQELS…VRRAAHWVVN (101 aa). Residues 827–869 are disordered; it reads QSLQNPKDGGAPKVEICPPNGKGGKQSSEEEKKQDEDDDTGPK. An III repeat occupies 890–1177; that stretch reads AHWVVNLRYF…IITFQEQGEA (288 aa). A helical membrane pass occupies residues 896-914; sequence LRYFDFFIMVVISLSSIAL. Topologically, residues 915 to 930 are extracellular; the sequence is AAEDPVWEDSPRNEVL. The helical transmembrane segment at 931–950 threads the bilayer; the sequence is NYFDYAFTGVFTVEMILKII. Over 951–962 the chain is Cytoplasmic; the sequence is DLGIILHPGSYL. The chain crosses the membrane as a helical span at residues 963–981; it reads REFWNIMDAVVVICAAVSF. The Extracellular portion of the chain corresponds to 982–994; sequence AFDMTGSSAGQNL. An N-linked (GlcNAc...) asparagine glycan is attached at Asn993. Residues 995–1013 traverse the membrane as a helical segment; it reads STIKSLRVLRVLRPLKTIK. Topologically, residues 1014–1032 are cytoplasmic; it reads RVPKLKAVFDCVVNSLKNV. A helical transmembrane segment spans residues 1033 to 1052; sequence INILIVYILFQFIFAVIAVQ. Residues 1053-1141 lie on the Extracellular side of the membrane; it reads LFNGKFFYCS…EDKGPIQNFR (89 aa). Residues 1142-1166 traverse the membrane as a helical segment; it reads IEMSIFYIVYFIVFPFFFVNIFVAL. At 1167–1221 the chain is on the cytoplasmic side; that stretch reads IIITFQEQGEAELQDGEIDKNQKSCIDFTIQARPLERYMPKERNSVKYKIWRIVV. Residues 1214–1470 form an IV repeat; that stretch reads YKIWRIVVST…DNFDYLTRDS (257 aa). A helical membrane pass occupies residues 1222-1250; the sequence is STPFEYFIMGLIVLNTVLLMMKFHRQSDA. Residues 1251–1255 are Extracellular-facing; that stretch reads YKNTL. The helical transmembrane segment at 1256-1275 threads the bilayer; sequence KYMNMCFTGMFTVECILKIA. Residues 1276–1283 lie on the Cytoplasmic side of the membrane; that stretch reads AFGVRNFF. A helical membrane pass occupies residues 1284-1302; that stretch reads KDAWNTFDFITVIGSIVDA. Residues 1303 to 1309 lie on the Extracellular side of the membrane; the sequence is LVIEFGE. Residues 1310–1328 traverse the membrane as a helical segment; it reads NFINVGFLRLFRAARLIKL. At 1329-1347 the chain is on the cytoplasmic side; it reads LRQGYTIRILLWTFVQSFK. A helical transmembrane segment spans residues 1348–1367; that stretch reads ALPYVCLLIAMLFFIYAIIG. At 1368 to 1431 the chain is on the extracellular side; the sequence is MQVFGNIALD…AKAGKQEGGC (64 aa). The interval 1430 to 1471 is phenylalkylamine binding; it reads GCGSNIAYAYFVSFIFFCSFLMLNLFVAVIMDNFDYLTRDSS. A helical membrane pass occupies residues 1432-1456; sequence GSNIAYAYFVSFIFFCSFLMLNLFV. Over 1457–1904 the chain is Cytoplasmic; sequence AVIMDNFDYL…HSDSDEDDWC (448 aa). The region spanning 1476–1511 is the EF-hand domain; sequence HHLDEFVRIWAEYDPNATGKIHYTEMYDMLKNMDPP. Residues Asp1489, Asn1491, Thr1493, Lys1495, and Glu1500 each contribute to the Ca(2+) site. Disordered regions lie at residues 1652–1694, 1710–1788, and 1870–1904; these read THTG…HEGP, THHP…HSYP, and GGRL…DDWC. Over residues 1670–1681 the composition is skewed to low complexity; the sequence is RSPSLRHSPGRP. A compositionally biased stretch (basic and acidic residues) spans 1682 to 1691; the sequence is GYDHHGHYYH. Over residues 1710–1725 the composition is skewed to basic residues; it reads THHPHPSQYNHRHRMR. The segment covering 1727 to 1740 has biased composition (low complexity); the sequence is PWSASTSPARTPSP. The span at 1751–1762 shows a compositional bias: polar residues; that stretch reads GTTSLEQRSRSP. The segment covering 1771 to 1784 has biased composition (basic residues); that stretch reads PHTHQHYHRHHPHQ.

Belongs to the calcium channel alpha-1 subunit (TC 1.A.1.11) family. CACNA1I subfamily. Interacts with CATSPER1 and CATSPER2, leading to suppress T-type calcium channel activity.

It localises to the membrane. In terms of biological role, voltage-sensitive calcium channels (VSCC) mediate the entry of calcium ions into excitable cells and are also involved in a variety of calcium-dependent processes, including muscle contraction, neurotransmitter release, gene expression, cell motility, cell division and cell death. This Apis mellifera (Honeybee) protein is Voltage-dependent calcium channel type A subunit alpha-1 (CAC).